A 526-amino-acid chain; its full sequence is Probable feruloyl esterase B (526 aa).

Positions 1–18 are cleaved as a signal peptide; sequence MARLSLLTLLALGSAALA. 2 disulfides stabilise this stretch: C27–C74 and C62–C113. N137 carries N-linked (GlcNAc...) asparagine glycosylation. 4 disulfide bridges follow: C186-C441, C255-C272, C281-C291, and C503-C525. S187 (acyl-ester intermediate) is an active-site residue. N233 is a glycosylation site (N-linked (GlcNAc...) asparagine). 5 residues coordinate Ca(2+): D256, D259, A261, D263, and I265. N-linked (GlcNAc...) asparagine glycosylation is present at N311. Residues D400 and H440 each act as charge relay system in the active site. The N-linked (GlcNAc...) asparagine glycan is linked to N516.

The protein belongs to the tannase family.

It localises to the secreted. It catalyses the reaction feruloyl-polysaccharide + H2O = ferulate + polysaccharide.. In terms of biological role, involved in degradation of plant cell walls. Hydrolyzes the feruloyl-arabinose ester bond in arabinoxylans as well as the feruloyl-galactose and feruloyl-arabinose ester bonds in pectin. This is Probable feruloyl esterase B (faeB) from Aspergillus clavatus (strain ATCC 1007 / CBS 513.65 / DSM 816 / NCTC 3887 / NRRL 1 / QM 1276 / 107).